A 216-amino-acid chain; its full sequence is ATP-dependent Clp protease proteolytic subunit (216 aa).

Catalysis depends on Ser101, which acts as the Nucleophile. The active site involves His126.

It belongs to the peptidase S14 family. As to quaternary structure, component of the chloroplastic Clp protease core complex.

Its subcellular location is the plastid. It localises to the chloroplast stroma. It catalyses the reaction Hydrolysis of proteins to small peptides in the presence of ATP and magnesium. alpha-casein is the usual test substrate. In the absence of ATP, only oligopeptides shorter than five residues are hydrolyzed (such as succinyl-Leu-Tyr-|-NHMec, and Leu-Tyr-Leu-|-Tyr-Trp, in which cleavage of the -Tyr-|-Leu- and -Tyr-|-Trp bonds also occurs).. In terms of biological role, cleaves peptides in various proteins in a process that requires ATP hydrolysis. Has a chymotrypsin-like activity. Plays a major role in the degradation of misfolded proteins. In Hordeum vulgare (Barley), this protein is ATP-dependent Clp protease proteolytic subunit.